The sequence spans 200 residues: Small ribosomal subunit protein uS4 (200 aa).

Residues 20–41 (TGTGKELDKRPYAPGQHGPNQR) are disordered. One can recognise an S4 RNA-binding domain in the interval 92-152 (SRLDNLVYRL…EKSKNLDVVK (61 aa)).

The protein belongs to the universal ribosomal protein uS4 family. As to quaternary structure, part of the 30S ribosomal subunit. Contacts protein S5. The interaction surface between S4 and S5 is involved in control of translational fidelity.

Its function is as follows. One of the primary rRNA binding proteins, it binds directly to 16S rRNA where it nucleates assembly of the body of the 30S subunit. With S5 and S12 plays an important role in translational accuracy. In Oceanobacillus iheyensis (strain DSM 14371 / CIP 107618 / JCM 11309 / KCTC 3954 / HTE831), this protein is Small ribosomal subunit protein uS4.